The chain runs to 689 residues: Glycine--tRNA ligase beta subunit (689 aa).

It belongs to the class-II aminoacyl-tRNA synthetase family. As to quaternary structure, tetramer of two alpha and two beta subunits.

The protein resides in the cytoplasm. The catalysed reaction is tRNA(Gly) + glycine + ATP = glycyl-tRNA(Gly) + AMP + diphosphate. This Photorhabdus laumondii subsp. laumondii (strain DSM 15139 / CIP 105565 / TT01) (Photorhabdus luminescens subsp. laumondii) protein is Glycine--tRNA ligase beta subunit.